Consider the following 504-residue polypeptide: Syntaphilin (504 aa).

The segment at Met-1–Gln-74 is disordered. Low complexity-rich tracts occupy residues Gly-7–Arg-26 and Ser-33–Ser-49. Residues Leu-79–Lys-161 adopt a coiled-coil conformation. The tract at residues Val-191–Gly-244 is disordered. 2 positions are modified to phosphoserine: Ser-200 and Ser-204. Over residues Arg-207 to Lys-217 the composition is skewed to polar residues. Thr-214 carries the post-translational modification Phosphothreonine. Position 219 is a phosphoserine (Ser-219). Residue Thr-235 is modified to Phosphothreonine. The helical transmembrane segment at Tyr-437–Cys-456 threads the bilayer.

In terms of assembly, binds to STX1A. Interacts with DNM1; this interaction inhibits the binding of DNM1 to AMPH and DNM1-receptor-mediated endocytosis.

The protein localises to the membrane. The protein resides in the synapse. It localises to the synaptosome. Inhibits SNARE complex formation by absorbing free STX1A. The protein is Syntaphilin of Rattus norvegicus (Rat).